Consider the following 734-residue polypeptide: MATKFPKFSQALAQDPATRRIWYGLATAHDLESHDGMTEENLYQKIFASHFGHLAVIFLWTSGNLFHVAWQGNFEQWVLNPLKVKPIAHAIWDPHFGQPAVKAFTKGGVSYPVNIATSGVYHWWYTIGMRSNTDLYAGSLFLLFLAGVFLFAGWLHLQPKFRPGLSWFKNNESRLNHHLSGLFGFSSLAWSAHLIHVAIPEARGQHVCWDNFTKVAPHPAGLQPFFTGNWGAYAASPDTTNHIFGTSEGAGTAILTFLGGFHPQTQALWLTDIAHHHLAIGVVFIFAGHMYRTNWGIGHSLKEILDAHRPPGGRLGAGHKGIFETLTNSLHFQLGLALASLGVITSLVAQHMYALPSYAFIAKDYVTQSALYTHHQYIAGFLMVGAFAHGAIFFVRDYDPEQNKNNVLARILDHKEAIISHLSWVSLFLGFHTLGIYVHNDVVVAFGTPEKQILVEPVFAQWIQASSGKALYGFDVLLSSTNSVAANASSNIWLPGWLEAINSGKNSLFLPIGPGDFLIHHAIALALHTTTLILVKGALDARGSKLMPDKKDFGYAFPCDGPGRGGTCDISAWDAFYLSMFWMLNTIGWVTFYWHWKHITIWQGNAGQFNESSTYIMGWLRDYLWLNSSPLINGYNPFGMNSLSVWSWMFLFGHLIWATGFMFLISWRGYWQELIETLVWAHERTPLANLVRWKDKPVALSIVQARLVGLIHFTAGYIFTYAAFVIASTTGKFG.

The next 8 helical transmembrane spans lie at 46 to 69 (IFAS…FHVA), 135 to 158 (LYAG…LHLQ), 175 to 199 (LNHH…HVAI), 273 to 291 (IAHH…GHMY), 330 to 353 (LHFQ…QHMY), 369 to 395 (SALY…IFFV), 417 to 439 (AIIS…IYVH), and 517 to 535 (FLIH…LILV). [4Fe-4S] cluster contacts are provided by C559 and C568. 2 helical membrane passes run 575-596 (AFYL…YWHW) and 643-665 (LSVW…MFLI). Chlorophyll a is bound by residues H654, M662, and Y670. W671 is a binding site for phylloquinone. Residues 707–727 (LVGLIHFTAGYIFTYAAFVIA) form a helical membrane-spanning segment.

Belongs to the PsaA/PsaB family. The PsaA/B heterodimer binds the P700 chlorophyll special pair and subsequent electron acceptors. PSI consists of a core antenna complex that captures photons, and an electron transfer chain that converts photonic excitation into a charge separation. The eukaryotic PSI reaction center is composed of at least 11 subunits. P700 is a chlorophyll a/chlorophyll a' dimer, A0 is one or more chlorophyll a, A1 is one or both phylloquinones and FX is a shared 4Fe-4S iron-sulfur center. is required as a cofactor.

Its subcellular location is the plastid. The protein resides in the chloroplast thylakoid membrane. It carries out the reaction reduced [plastocyanin] + hnu + oxidized [2Fe-2S]-[ferredoxin] = oxidized [plastocyanin] + reduced [2Fe-2S]-[ferredoxin]. PsaA and PsaB bind P700, the primary electron donor of photosystem I (PSI), as well as the electron acceptors A0, A1 and FX. PSI is a plastocyanin/cytochrome c6-ferredoxin oxidoreductase, converting photonic excitation into a charge separation, which transfers an electron from the donor P700 chlorophyll pair to the spectroscopically characterized acceptors A0, A1, FX, FA and FB in turn. Oxidized P700 is reduced on the lumenal side of the thylakoid membrane by plastocyanin or cytochrome c6. The sequence is that of Photosystem I P700 chlorophyll a apoprotein A2 from Rhodomonas salina (Cryptomonas salina).